The primary structure comprises 476 residues: Protein DETOXIFICATION 3 (476 aa).

Transmembrane regions (helical) follow at residues 35 to 55, 66 to 86, 117 to 137, 146 to 166, 185 to 205, 208 to 228, 260 to 280, 289 to 309, 331 to 351, 370 to 390, 402 to 422, and 433 to 453; these read AAPM…SVMV, GVAL…FGLA, IPIC…LISL, VAGS…FFIP, LTTL…FGLG, GAAM…SCYV, AAMV…SGLL, VLSI…GVAA, VLAG…LLFT, VANL…TAVL, IGAL…GVYL, and LWCG…FVTA.

Belongs to the multi antimicrobial extrusion (MATE) (TC 2.A.66.1) family.

It is found in the membrane. In Arabidopsis thaliana (Mouse-ear cress), this protein is Protein DETOXIFICATION 3.